The sequence spans 353 residues: MIDADRLITATGGRDRDEQMDRAIRPLSLADYIGQPTVREQMELFIQAARGRSEALDHTLIFGPPGLGKTTLANIIAQEMGVSIKSTSGPVLERPGDLAAILTNLEPNDVLFIDEIHRLSPIVEEVLYPAMEDFQLDIMIGEGPAARSIKLDLPPFTLVGATTRAGMLTNPLRDRFGIVQRLEFYNIADLSTIVSRSAGILGLVIEPQGAFEIARRARGTPRIANRLLRRVRDFAEVRGNGQITRQTADKALNLLDVDEHGFDHQDRRLLLTMIEKFDGGPVGVDSLAAAISEERHTIEDVLEPYLIQQGYIMRTPRGRVVTRHAYLHFGLNIPSRMGEIPVPDDFGDEPVDL.

The tract at residues Ala4–Tyr185 is large ATPase domain (RuvB-L). ATP-binding positions include Ile24, Arg25, Gly66, Lys69, Thr70, Thr71, Glu132–Phe134, Arg175, Tyr185, and Arg222. Mg(2+) is bound at residue Thr70. The interval Asn186–Asp256 is small ATPAse domain (RuvB-S). Residues Glu259–Leu353 form a head domain (RuvB-H) region. DNA contacts are provided by Arg295, Arg314, and Arg319.

The protein belongs to the RuvB family. Homohexamer. Forms an RuvA(8)-RuvB(12)-Holliday junction (HJ) complex. HJ DNA is sandwiched between 2 RuvA tetramers; dsDNA enters through RuvA and exits via RuvB. An RuvB hexamer assembles on each DNA strand where it exits the tetramer. Each RuvB hexamer is contacted by two RuvA subunits (via domain III) on 2 adjacent RuvB subunits; this complex drives branch migration. In the full resolvosome a probable DNA-RuvA(4)-RuvB(12)-RuvC(2) complex forms which resolves the HJ.

Its subcellular location is the cytoplasm. It catalyses the reaction ATP + H2O = ADP + phosphate + H(+). The RuvA-RuvB-RuvC complex processes Holliday junction (HJ) DNA during genetic recombination and DNA repair, while the RuvA-RuvB complex plays an important role in the rescue of blocked DNA replication forks via replication fork reversal (RFR). RuvA specifically binds to HJ cruciform DNA, conferring on it an open structure. The RuvB hexamer acts as an ATP-dependent pump, pulling dsDNA into and through the RuvAB complex. RuvB forms 2 homohexamers on either side of HJ DNA bound by 1 or 2 RuvA tetramers; 4 subunits per hexamer contact DNA at a time. Coordinated motions by a converter formed by DNA-disengaged RuvB subunits stimulates ATP hydrolysis and nucleotide exchange. Immobilization of the converter enables RuvB to convert the ATP-contained energy into a lever motion, pulling 2 nucleotides of DNA out of the RuvA tetramer per ATP hydrolyzed, thus driving DNA branch migration. The RuvB motors rotate together with the DNA substrate, which together with the progressing nucleotide cycle form the mechanistic basis for DNA recombination by continuous HJ branch migration. Branch migration allows RuvC to scan DNA until it finds its consensus sequence, where it cleaves and resolves cruciform DNA. The sequence is that of Holliday junction branch migration complex subunit RuvB from Pseudomonas syringae pv. syringae (strain B728a).